The sequence spans 520 residues: Eukaryotic translation initiation factor 3 subunit L (520 aa).

The PCI domain occupies phenylalanine 278 to leucine 478.

It belongs to the eIF-3 subunit L family. As to quaternary structure, component of the eukaryotic translation initiation factor 3 (eIF-3) complex.

It localises to the cytoplasm. Functionally, component of the eukaryotic translation initiation factor 3 (eIF-3) complex, which is involved in protein synthesis of a specialized repertoire of mRNAs and, together with other initiation factors, stimulates binding of mRNA and methionyl-tRNAi to the 40S ribosome. The eIF-3 complex specifically targets and initiates translation of a subset of mRNAs involved in cell proliferation. This chain is Eukaryotic translation initiation factor 3 subunit L, found in Yarrowia lipolytica (strain CLIB 122 / E 150) (Yeast).